A 446-amino-acid chain; its full sequence is Transcription factor Sox-10 (446 aa).

Disordered stretches follow at residues 1 to 60 (MSDD…SEDE), 153 to 191 (RLRMQHKKDHPDYKYQPRRRKNGKPSPGEGDGSSEAEGG), and 203 to 264 (HLDH…IDFG). Over residues 36–48 (DDDDDDDEEEEEE) the composition is skewed to acidic residues. Residue K52 forms a Glycyl lysine isopeptide (Lys-Gly) (interchain with G-Cter in SUMO) linkage. The interval 56 to 96 (DSEDERFPVCIREAVSQVLNGYDWTLVPMPVRVNGGSKSKP) is dimerization (DIM). A DNA-binding region (HMG box) is located at residues 98 to 166 (VKRPMNAFMV…QHKKDHPDYK (69 aa)). Positions 153 to 167 (RLRMQHKKDHPDYKY) are enriched in basic and acidic residues. Residues 213–226 (SDGNSEHSTGQSHG) show a composition bias toward polar residues. Residues 217–303 (SEHSTGQSHG…NGHAGHPSHI (87 aa)) form a transactivation domain (TAM) region. Residues 243 to 257 (SDGKRDGSHALREGG) are compositionally biased toward basic and acidic residues. A transactivation domain (TAC) region spans residues 337–446 (KAQVKTESSS…QPVYTTLSRP (110 aa)). Residue K341 forms a Glycyl lysine isopeptide (Lys-Gly) (interchain with G-Cter in SUMO) linkage. The segment at 421-446 (SDPPSVAQSHSPTHWEQPVYTTLSRP) is disordered. Positions 426–446 (VAQSHSPTHWEQPVYTTLSRP) are enriched in polar residues.

As to quaternary structure, interacts with the sumoylation factors ube2i/ubc9 and sumo1. Sumoylated. As to expression, first expressed at stages 13/14 at the lateral edges of the neural plate, in the neural crest forming region. By stage 22, neural crest cells migrate in the cranial region and strong expression is seen in the crest cells that populate the branchial arches as well as those migrating in the frontonasal region. Also strongly expressed in the trunk neural crest. Expression in the otic vesicle begins around stage 25 and persists until at least stage 40. At stage 30, expression is down-regulated in the cranial neural crest of the pharyngeal arches but persists in the trunk neural crest, in the otic vesicle and in discrete domains adjacent to the hindbrain. At stage 40, expression is restricted to the otic vesicle, differentiated pigment cells, and in several cranial ganglia.

It localises to the cytoplasm. The protein localises to the nucleus. Its function is as follows. Acts early in neural crest formation, functioning redundantly with the other group E Sox factors sox8 and sox9 to induce neural crest progenitors. Acts downstream of wnt-signaling at the neural plate border. Involved in the specification of neural crest progenitors fated to form the pigment cell lineage. The chain is Transcription factor Sox-10 (sox10) from Xenopus laevis (African clawed frog).